The primary structure comprises 108 residues: ATP-dependent Clp protease adapter protein ClpS (108 aa).

Belongs to the ClpS family. Binds to the N-terminal domain of the chaperone ClpA.

Functionally, involved in the modulation of the specificity of the ClpAP-mediated ATP-dependent protein degradation. This chain is ATP-dependent Clp protease adapter protein ClpS, found in Cupriavidus metallidurans (strain ATCC 43123 / DSM 2839 / NBRC 102507 / CH34) (Ralstonia metallidurans).